Here is a 195-residue protein sequence, read N- to C-terminus: ATP synthase subunit b (195 aa).

A helical transmembrane segment spans residues 28 to 48 (IFPNVYVLIAHVISLIFLLLL).

This sequence belongs to the ATPase B chain family. F-type ATPases have 2 components, F(1) - the catalytic core - and F(0) - the membrane proton channel. F(1) has five subunits: alpha(3), beta(3), gamma(1), delta(1), epsilon(1). F(0) has three main subunits: a(1), b(2) and c(10-14). The alpha and beta chains form an alternating ring which encloses part of the gamma chain. F(1) is attached to F(0) by a central stalk formed by the gamma and epsilon chains, while a peripheral stalk is formed by the delta and b chains.

It is found in the cell membrane. Functionally, f(1)F(0) ATP synthase produces ATP from ADP in the presence of a proton or sodium gradient. F-type ATPases consist of two structural domains, F(1) containing the extramembraneous catalytic core and F(0) containing the membrane proton channel, linked together by a central stalk and a peripheral stalk. During catalysis, ATP synthesis in the catalytic domain of F(1) is coupled via a rotary mechanism of the central stalk subunits to proton translocation. In terms of biological role, component of the F(0) channel, it forms part of the peripheral stalk, linking F(1) to F(0). This is ATP synthase subunit b from Malacoplasma penetrans (strain HF-2) (Mycoplasma penetrans).